Consider the following 586-residue polypeptide: Protein BONZAI 2 (586 aa).

Residue G2 is the site of N-myristoyl glycine attachment. 2 consecutive C2 domains span residues 25–164 (SAAT…ALEL) and 176–303 (PQHN…NLAL). Residues D62, D68, D121, and D123 each coordinate Ca(2+). The region spanning 344-563 (NFMVAIDFTA…SVVEALLAEL (220 aa)) is the VWFA domain.

This sequence belongs to the copine family. In terms of assembly, interacts with BAP1 and BAP2. It depends on Ca(2+) as a cofactor. Expressed in roots, leaves and stems. Expressed in young growing tissues.

It is found in the cell membrane. Its function is as follows. Negative regulator of cell death and defense responses. May repress a number of R genes and may have effects in promoting growth and development. May function in membrane trafficking and in fusion of vesicles with plasma membrane. The polypeptide is Protein BONZAI 2 (BON2) (Arabidopsis thaliana (Mouse-ear cress)).